The primary structure comprises 339 residues: Lipopolysaccharide 1,2-glucosyltransferase (339 aa).

UDP is bound by residues G35–Y40 and D132–A133. Mg(2+) is bound by residues D132 and D134. 2 consecutive short sequence motifs (DXD) follow at residues D132 to D134 and D219 to D221. Position 268 (H268) interacts with Mg(2+). H268–K274 lines the UDP pocket.

This sequence belongs to the glycosyltransferase 8 family. It depends on Mg(2+) as a cofactor.

It is found in the cell inner membrane. It catalyses the reaction UDP-glucose + [lipopolysaccharide] = UDP + D-glucosyl-[lipopolysaccharide].. It participates in bacterial outer membrane biogenesis; LPS core biosynthesis. In terms of biological role, glucosyltransferase involved in the biosynthesis of the core oligosaccharide region of lipopolysaccharide (LPS). Catalyzes the addition of a glucose (glucose II) to the outer-core galactose I. Has a marked preference for its specific donor substrate, but it appears to have a relaxed specificity for alternate LPS acceptor residues, providing the overall size of the acceptor is conserved. In Escherichia coli, this protein is Lipopolysaccharide 1,2-glucosyltransferase.